The chain runs to 99 residues: Malonate decarboxylase acyl carrier protein (99 aa).

Ser25 carries the O-(phosphoribosyl dephospho-coenzyme A)serine modification.

Belongs to the MdcC family. In terms of processing, covalently binds the prosthetic group of malonate decarboxylase.

Its subcellular location is the cytoplasm. In terms of biological role, subunit of malonate decarboxylase, it is an acyl carrier protein to which acetyl and malonyl thioester residues are bound via a 2'-(5''-phosphoribosyl)-3'-dephospho-CoA prosthetic group and turn over during the catalytic mechanism. This Pseudomonas fluorescens (strain ATCC BAA-477 / NRRL B-23932 / Pf-5) protein is Malonate decarboxylase acyl carrier protein.